A 31-amino-acid polypeptide reads, in one-letter code: Gamma-conotoxin-like As7a (31 aa).

3 cysteine pairs are disulfide-bonded: cysteine 2/cysteine 16, cysteine 9/cysteine 20, and cysteine 15/cysteine 31. The residue at position 14 (glutamate 14) is a 4-carboxyglutamate.

This sequence belongs to the conotoxin O1 superfamily. Expressed by the venom duct.

It is found in the secreted. Functionally, gamma-conotoxins may act on voltage-gated non-specific cation pacemaker channels (HCN). Elicits toxic effects in the freshwater snail Pomacea paludosa after intramuscular injection, but it has no effect when injected intracerebrally into mice. The chain is Gamma-conotoxin-like As7a from Conus cancellatus (Cancellate cone).